We begin with the raw amino-acid sequence, 445 residues long: Phosphoglucosamine mutase (445 aa).

Ser102 acts as the Phosphoserine intermediate in catalysis. Mg(2+)-binding residues include Ser102, Asp240, Asp242, and Asp244. Ser102 carries the post-translational modification Phosphoserine.

The protein belongs to the phosphohexose mutase family. It depends on Mg(2+) as a cofactor. Post-translationally, activated by phosphorylation.

It catalyses the reaction alpha-D-glucosamine 1-phosphate = D-glucosamine 6-phosphate. Catalyzes the conversion of glucosamine-6-phosphate to glucosamine-1-phosphate. In Mycobacterium sp. (strain JLS), this protein is Phosphoglucosamine mutase.